We begin with the raw amino-acid sequence, 348 residues long: uncharacterized protein (348 aa).

It localises to the virion. This is an uncharacterized protein from Acanthamoeba polyphaga mimivirus (APMV).